We begin with the raw amino-acid sequence, 697 residues long: PHD finger protein At1g33420 (697 aa).

The PHD-type zinc finger occupies 603–653 (KVDCKCGTKDDDGERMLACDGCGVWHHTRCIGINNADALPSKFLCFRCIEL).

It is found in the nucleus. In Arabidopsis thaliana (Mouse-ear cress), this protein is PHD finger protein At1g33420.